We begin with the raw amino-acid sequence, 474 residues long: tRNA-2-methylthio-N(6)-dimethylallyladenosine synthase (474 aa).

The MTTase N-terminal domain occupies 3 to 120 (KKLLIKTWGC…LPQMIKDSQS (118 aa)). Residues cysteine 12, cysteine 49, cysteine 83, cysteine 157, cysteine 161, and cysteine 164 each contribute to the [4Fe-4S] cluster site. Residues 143 to 375 (RADGVTAFVS…QQQINTQAMR (233 aa)) form the Radical SAM core domain. Residues 378 to 441 (RQMLNTEQRI…TNSLRGELVR (64 aa)) enclose the TRAM domain.

It belongs to the methylthiotransferase family. MiaB subfamily. As to quaternary structure, monomer. [4Fe-4S] cluster is required as a cofactor.

It is found in the cytoplasm. It catalyses the reaction N(6)-dimethylallyladenosine(37) in tRNA + (sulfur carrier)-SH + AH2 + 2 S-adenosyl-L-methionine = 2-methylsulfanyl-N(6)-dimethylallyladenosine(37) in tRNA + (sulfur carrier)-H + 5'-deoxyadenosine + L-methionine + A + S-adenosyl-L-homocysteine + 2 H(+). In terms of biological role, catalyzes the methylthiolation of N6-(dimethylallyl)adenosine (i(6)A), leading to the formation of 2-methylthio-N6-(dimethylallyl)adenosine (ms(2)i(6)A) at position 37 in tRNAs that read codons beginning with uridine. The polypeptide is tRNA-2-methylthio-N(6)-dimethylallyladenosine synthase (Photobacterium profundum (strain SS9)).